The primary structure comprises 568 residues: MDNIISRGEIEDRIARGQAIVIYEGLVLNLEKWIKFHPGGDKAIHHMIGRDATDEMKAYHCDETVEIFRKWRIGRIDQEWENFLPPIQGGVFRFLNQQHDSTDLGLSNKWIAPNTSDQFKFIKNEKHMCGEPDVKIYPKIPQGVIPSLNLKEAYEKKVVTDPATVADNYDNELVRQDLETLPDLDPKTQEWLSKEYNKMHNEIIEAGLYQCNYFRYVKELTRIGLLFALSYYLLYHRDQKFWSAFSMGCAWQQLVFIAHDAGHISITHHYQLDNIFGMIIASWVGGLSLGWWKRNHNVHHLITNDPIHDPDIQHLPFFAVSTRLFDNIYSTYYEKFLWFDAFAKKVVPWQNYLYYPMLAFGRFNLYRLSWMHVLLGLGPRRGKAGWFRYFELCGLIFFNYWFFYLLVGCKLQTGWDRFQYIMVSHITTMLVHVQITLSHFAMSTSDLGVGEGFPMRQLRTSMDVDCPRWLDFLHGGLQFQVVHHLFPRLPRHNLRAAQPYVIEFCEKVGIKYSIYGFSKGNGVVLTKLQEIAVQAKTMLECASAMKKEATGEREADEKTYRTKSIKNA.

Positions 2 to 77 (DNIISRGEIE…FRKWRIGRID (76 aa)) constitute a Cytochrome b5 heme-binding domain. His-37 and His-60 together coordinate heme. The next 2 helical transmembrane spans lie at 241–261 (FWSA…AHDA) and 272–292 (LDNI…LGWW). The Histidine box-1 signature appears at 259–263 (HDAGH). Positions 296–300 (HNVHH) match the Histidine box-2 motif. 3 helical membrane passes run 352–377 (YLYY…LLGL), 389–409 (YFEL…LVGC), and 421–441 (IMVS…SHFA). The Histidine box-3 motif lies at 480–484 (QVVHH). Over residues 549–560 (ATGEREADEKTY) the composition is skewed to basic and acidic residues. Positions 549-568 (ATGEREADEKTYRTKSIKNA) are disordered.

The protein belongs to the fatty acid desaturase type 1 family.

Its subcellular location is the membrane. It catalyses the reaction an N-acylsphing-4-enine + 2 Fe(II)-[cytochrome b5] + O2 + 2 H(+) = a (4E,8E)-4-sphinga-4,8-dienine ceramide + 2 Fe(III)-[cytochrome b5] + 2 H2O. It functions in the pathway lipid metabolism; sphingolipid metabolism. Delta(8)-fatty-acid desaturase which introduces a double bond at the 8-position in the long-chain base (LCB) of ceramides. Required for the formation of the di-unsaturated sphingoid base (E,E)-sphinga-4,8-dienine during glucosylceramide (GluCer) biosynthesis. The sequence is that of Delta 8-(E)-sphingolipid desaturase from Lachancea kluyveri (strain ATCC 58438 / CBS 3082 / BCRC 21498 / NBRC 1685 / JCM 7257 / NCYC 543 / NRRL Y-12651) (Yeast).